The chain runs to 412 residues: Probable tRNA pseudouridine synthase D (412 aa).

The active-site Nucleophile is Asp-97. The 204-residue stretch at 167–370 (ALPNYYGYQR…YGGYRKVVLT (204 aa)) folds into the TRUD domain.

Belongs to the pseudouridine synthase TruD family.

It catalyses the reaction uridine(13) in tRNA = pseudouridine(13) in tRNA. Functionally, could be responsible for synthesis of pseudouridine from uracil-13 in transfer RNAs. This chain is Probable tRNA pseudouridine synthase D, found in Pyrobaculum islandicum (strain DSM 4184 / JCM 9189 / GEO3).